A 242-amino-acid polypeptide reads, in one-letter code: MSKSRLTVFSFVRRFLLRLMVVLAIFWGGGIALFSVAPVPFSAVMVERQVSAWLHGNFRYVAHSDWVSMDQISPWMGLAVIAAEDQKFPEHWGFDVASIEQALAHNERNENRIRGASTISQQTAKNLFLWDGRSWVRKGLEAGLTLGIETVWSKKRILTVYLNIAEFGDGVFGVEAAAQRYFHKPASKLTRSQAALLAAVLPNPLRFKVSAPSGYVRSRQAWILRQMYQLGGEPFMQQHQLD.

A helical membrane pass occupies residues 19-39 (LMVVLAIFWGGGIALFSVAPV).

It belongs to the glycosyltransferase 51 family.

It is found in the cell inner membrane. It carries out the reaction [GlcNAc-(1-&gt;4)-Mur2Ac(oyl-L-Ala-gamma-D-Glu-L-Lys-D-Ala-D-Ala)](n)-di-trans,octa-cis-undecaprenyl diphosphate + beta-D-GlcNAc-(1-&gt;4)-Mur2Ac(oyl-L-Ala-gamma-D-Glu-L-Lys-D-Ala-D-Ala)-di-trans,octa-cis-undecaprenyl diphosphate = [GlcNAc-(1-&gt;4)-Mur2Ac(oyl-L-Ala-gamma-D-Glu-L-Lys-D-Ala-D-Ala)](n+1)-di-trans,octa-cis-undecaprenyl diphosphate + di-trans,octa-cis-undecaprenyl diphosphate + H(+). Its pathway is cell wall biogenesis; peptidoglycan biosynthesis. In terms of biological role, peptidoglycan polymerase that catalyzes glycan chain elongation from lipid-linked precursors. The sequence is that of Biosynthetic peptidoglycan transglycosylase from Escherichia coli O127:H6 (strain E2348/69 / EPEC).